A 1196-amino-acid polypeptide reads, in one-letter code: uncharacterized protein (1196 aa).

Residues 27-47 (ILLLLGSFILLNVWINVVTLL) form a helical membrane-spanning segment. Disordered regions lie at residues 150–345 (GGGE…PQAH), 367–402 (SSVP…ASAP), 669–762 (TQDS…QKNT), 775–806 (CLTQ…DSGI), 826–877 (QATD…QDSE), 960–1009 (YRSS…GPYK), and 1168–1196 (KCEA…DIRM). Polar residues predominate over residues 157–177 (VTASKAQASLLSRPETSSQFP). 2 stretches are compositionally biased toward low complexity: residues 212-227 (HSPT…HPWT) and 253-279 (THSQ…TPAH). Residues 299–321 (HTSAQAQTHSPPHTPEYTHSQAH) are compositionally biased toward polar residues. Over residues 391-402 (APTPAPVPASAP) the composition is skewed to pro residues. Polar residues-rich tracts occupy residues 733 to 742 (YLCQNPSPSQ), 750 to 762 (SGIT…QKNT), 787 to 804 (PFTQ…TQDS), and 826 to 849 (QATD…TGNV). Over residues 962–971 (SSEHSQDSNL) the composition is skewed to basic and acidic residues.

It is found in the membrane. This is an uncharacterized protein from Homo sapiens (Human).